A 251-amino-acid polypeptide reads, in one-letter code: MNLISIPAFQDNYIWVLSENNGRCIIVDPGEAAPVLAAIEENQWQPEAILLTHHHQDHVGGVKQLREKFPSIVVYGPAETQDKGVTQVVGDGDRLSILGHDFSIFSTPGHTLGHICYYSEPYLFCGDTMFSGGCGRLFEGTAEQMYQSFMKINALPEETLICCAHEYTLANMKFALSILPDDRDINDYYHKVNELRAKKQKTLPVTLKNERRINLFLRVNDIDLIDKINKETNLQHSVARFAWLRSKKDDF.

The Zn(2+) site is built by histidine 53, histidine 55, aspartate 57, histidine 58, histidine 110, aspartate 127, and histidine 165.

This sequence belongs to the metallo-beta-lactamase superfamily. Glyoxalase II family. Monomer. It depends on Zn(2+) as a cofactor.

It carries out the reaction an S-(2-hydroxyacyl)glutathione + H2O = a 2-hydroxy carboxylate + glutathione + H(+). The protein operates within secondary metabolite metabolism; methylglyoxal degradation; (R)-lactate from methylglyoxal: step 2/2. Thiolesterase that catalyzes the hydrolysis of S-D-lactoyl-glutathione to form glutathione and D-lactic acid. This is Hydroxyacylglutathione hydrolase from Klebsiella pneumoniae subsp. pneumoniae (strain ATCC 700721 / MGH 78578).